The chain runs to 244 residues: 1-(5-phosphoribosyl)-5-[(5-phosphoribosylamino)methylideneamino] imidazole-4-carboxamide isomerase (244 aa).

The active-site Proton acceptor is the Asp10. Asp129 (proton donor) is an active-site residue.

Belongs to the HisA/HisF family.

The protein resides in the cytoplasm. The enzyme catalyses 1-(5-phospho-beta-D-ribosyl)-5-[(5-phospho-beta-D-ribosylamino)methylideneamino]imidazole-4-carboxamide = 5-[(5-phospho-1-deoxy-D-ribulos-1-ylimino)methylamino]-1-(5-phospho-beta-D-ribosyl)imidazole-4-carboxamide. It functions in the pathway amino-acid biosynthesis; L-histidine biosynthesis; L-histidine from 5-phospho-alpha-D-ribose 1-diphosphate: step 4/9. In Rhodococcus opacus (strain B4), this protein is 1-(5-phosphoribosyl)-5-[(5-phosphoribosylamino)methylideneamino] imidazole-4-carboxamide isomerase.